A 973-amino-acid chain; its full sequence is GATOR2 complex protein WDR59 (973 aa).

WD repeat units follow at residues 57–98 (QSKW…GEVC), 103–143 (GHTR…KPTV), 146–185 (SAVA…TAVE), 189–229 (AHLS…KYLN), 232–276 (PCQV…TPVH), and 280–324 (GHDD…QRLC). The disordered stretch occupies residues 346–365 (DKALQPQDSEPQHSSGHGDE). A compositionally biased stretch (polar residues) spans 351 to 360 (PQDSEPQHSS). One can recognise an RWD domain in the interval 393 to 494 (QEFSLINVQI…RQLVSWLESV (102 aa)). The C4-type zinc finger occupies 900 to 920 (YCSHCRSEARGTQCAICKGFT). Cysteine 901, cysteine 904, cysteine 913, cysteine 916, cysteine 926, cysteine 937, histidine 942, histidine 945, histidine 948, cysteine 959, cysteine 963, cysteine 965, and cysteine 967 together coordinate Zn(2+). Residues 921-970 (FQCAICHVAVRGSSNFCLTCGHGGHTSHMMEWFRTQEVCPTGCGCHCLLE) form an RING-type; atypical zinc finger.

The protein belongs to the WD repeat WDR59 family. Component of the GATOR2 subcomplex, composed of MIOS, SEC13, SEH1L, WDR24 and WDR59. The GATOR2 complex interacts with CASTOR1 and CASTOR2; the interaction is negatively regulated by arginine. The GATOR2 complex interacts with SESN1, SESN2 and SESN3; the interaction is negatively regulated by amino acids. Interacts with DDB1-CUL4A/B E3 ligase complexes.

Its subcellular location is the lysosome membrane. Its activity is regulated as follows. The GATOR2 complex is negatively regulated by the upstream amino acid sensors CASTOR1 and SESN2, which sequester the GATOR2 complex in absence of amino acids. In the presence of abundant amino acids, GATOR2 is released from CASTOR1 and SESN2 and activated. Functionally, as a component of the GATOR2 complex, functions as an activator of the amino acid-sensing branch of the mTORC1 signaling pathway. The GATOR2 complex indirectly activates mTORC1 through the inhibition of the GATOR1 subcomplex. GATOR2 probably acts as an E3 ubiquitin-protein ligase toward GATOR1. In the presence of abundant amino acids, the GATOR2 complex mediates ubiquitination of the NPRL2 core component of the GATOR1 complex, leading to GATOR1 inactivation. In the absence of amino acids, GATOR2 is inhibited, activating the GATOR1 complex. The sequence is that of GATOR2 complex protein WDR59 from Gallus gallus (Chicken).